The primary structure comprises 308 residues: ADP-L-glycero-D-manno-heptose-6-epimerase (308 aa).

Residues 10 to 11, 31 to 32, lysine 38, lysine 53, 75 to 79, and asparagine 92 contribute to the NADP(+) site; these read FI, DN, and EGACS. Tyrosine 139 serves as the catalytic Proton acceptor. Residue lysine 143 participates in NADP(+) binding. Asparagine 168 is a substrate binding site. NADP(+) is bound by residues valine 169 and lysine 177. Lysine 177 (proton acceptor) is an active-site residue. Substrate-binding positions include serine 179, histidine 186, 200-203, arginine 208, and tyrosine 271; that span reads FAGS.

Belongs to the NAD(P)-dependent epimerase/dehydratase family. HldD subfamily. In terms of assembly, homopentamer. NADP(+) serves as cofactor.

The catalysed reaction is ADP-D-glycero-beta-D-manno-heptose = ADP-L-glycero-beta-D-manno-heptose. It participates in nucleotide-sugar biosynthesis; ADP-L-glycero-beta-D-manno-heptose biosynthesis; ADP-L-glycero-beta-D-manno-heptose from D-glycero-beta-D-manno-heptose 7-phosphate: step 4/4. The protein operates within bacterial outer membrane biogenesis; LOS core biosynthesis. Functionally, catalyzes the interconversion between ADP-D-glycero-beta-D-manno-heptose and ADP-L-glycero-beta-D-manno-heptose via an epimerization at carbon 6 of the heptose. The sequence is that of ADP-L-glycero-D-manno-heptose-6-epimerase from Haemophilus influenzae (strain ATCC 51907 / DSM 11121 / KW20 / Rd).